Here is a 316-residue protein sequence, read N- to C-terminus: Methionyl-tRNA formyltransferase (316 aa).

A (6S)-5,6,7,8-tetrahydrofolate-binding site is contributed by 110–113; sequence SLLP.

This sequence belongs to the Fmt family.

The catalysed reaction is L-methionyl-tRNA(fMet) + (6R)-10-formyltetrahydrofolate = N-formyl-L-methionyl-tRNA(fMet) + (6S)-5,6,7,8-tetrahydrofolate + H(+). Functionally, attaches a formyl group to the free amino group of methionyl-tRNA(fMet). The formyl group appears to play a dual role in the initiator identity of N-formylmethionyl-tRNA by promoting its recognition by IF2 and preventing the misappropriation of this tRNA by the elongation apparatus. The polypeptide is Methionyl-tRNA formyltransferase (Halothermothrix orenii (strain H 168 / OCM 544 / DSM 9562)).